A 62-amino-acid chain; its full sequence is Beta-defensin 33 (62 aa).

A signal peptide spans 1–20 (MRLLFLLFLLLVCLAQKTSG). Intrachain disulfides connect cysteine 30-cysteine 59, cysteine 37-cysteine 52, and cysteine 45-cysteine 60.

This sequence belongs to the beta-defensin family.

Its subcellular location is the secreted. Its function is as follows. Has antibacterial activity. This chain is Beta-defensin 33 (Defb33), found in Rattus norvegicus (Rat).